The following is a 98-amino-acid chain: Small proline-rich protein 2B (98 aa).

5 repeat units span residues 21-29 (PKCPEPCPP), 30-38 (PKCPEPCPP), 39-47 (PVCCEPCPP), 48-56 (PKCPEPCPP), and 57-65 (PVCCEPCPP). The tract at residues 21-65 (PKCPEPCPPPKCPEPCPPPVCCEPCPPPKCPEPCPPPVCCEPCPP) is 5 X 9 AA approximate tandem repeats.

This sequence belongs to the cornifin (SPRR) family. In terms of tissue distribution, expressed in uterus.

Its subcellular location is the cytoplasm. Its function is as follows. Cross-linked envelope protein of keratinocytes. It is a keratinocyte protein that first appears in the cell cytosol, but ultimately becomes cross-linked to membrane proteins by transglutaminase. All that results in the formation of an insoluble envelope beneath the plasma membrane. The sequence is that of Small proline-rich protein 2B (Sprr2b) from Mus musculus (Mouse).